The primary structure comprises 119 residues: Protein TusC (119 aa).

Belongs to the DsrF/TusC family. In terms of assembly, heterohexamer, formed by a dimer of trimers. The hexameric TusBCD complex contains 2 copies each of TusB, TusC and TusD. The TusBCD complex interacts with TusE.

The protein resides in the cytoplasm. Functionally, part of a sulfur-relay system required for 2-thiolation of 5-methylaminomethyl-2-thiouridine (mnm(5)s(2)U) at tRNA wobble positions. The polypeptide is Protein TusC (Escherichia fergusonii (strain ATCC 35469 / DSM 13698 / CCUG 18766 / IAM 14443 / JCM 21226 / LMG 7866 / NBRC 102419 / NCTC 12128 / CDC 0568-73)).